Here is a 510-residue protein sequence, read N- to C-terminus: Tryptophan 6-hydroxylase fscE (510 aa).

The chain crosses the membrane as a helical span at residues 11-31; it reads LLPIEGVIILVFVLSCFSLAI. Cys-452 is a heme binding site.

The protein belongs to the cytochrome P450 family. Heme is required as a cofactor.

The protein resides in the membrane. It participates in secondary metabolite biosynthesis. Its function is as follows. Tryptophan 6-hydroxylase; part of the fragmented gene cluster that mediates the biosynthesis of fusarochromene, a tryptophan-derived metabolite closely related to a group of mycotoxins including fusarochromanone. Within the pathway, fscE hydroxalates the first intermediate D-tryptophan to yield 6-hydroxytryptophan. The first step of the pathway is the epimerization of L-tryptophan to D-tryptophan in the presence of the NRPS-like tryptophan epimerase fscC. D-tryptophan is subsequently hydroxylated by the tryptophan 6-hydroxylase fscE to yield 6-hydroxytryptophan. The pyrrole ring undergoes cleavaged by the tryptophan 2,3-dioxygenase fscD and is finally converted to 4-hydroxykyrunenine by the hydrolase fscH. The NRPS-like oxidoreductase fscA reduces the carboxyl group to primary alcohol and the DMATS-type prenyltransferase fscG performs prenylation, followed by the formation of a chromene ring catalyzed by the oxidoreductase fscI, which leads to desacetylfusarochromene. Epoxidation by fscF and rearrangement reactions of chromene double bonds convert compound desacetylfusarochromene to fusarochromanones. Although specific acetyltransferases were not found near the fsc gene cluster, several predicted enzymes containing the N-acetyltransferase superfamily domain are present in the genome of F.equiseti. These predicted enzymes may have the potential to convert desacetylfusarochromene to fusarochromene. The protein is Tryptophan 6-hydroxylase fscE of Fusarium equiseti (Fusarium scirpi).